The following is a 77-amino-acid chain: DNA-directed RNA polymerase subunit Rpo10 (77 aa).

4 residues coordinate Zn(2+): Cys7, Cys10, Cys44, and Cys45.

The protein belongs to the archaeal Rpo10/eukaryotic RPB10 RNA polymerase subunit family. In terms of assembly, part of the RNA polymerase complex. Requires Zn(2+) as cofactor.

Its subcellular location is the cytoplasm. It catalyses the reaction RNA(n) + a ribonucleoside 5'-triphosphate = RNA(n+1) + diphosphate. Its function is as follows. DNA-dependent RNA polymerase (RNAP) catalyzes the transcription of DNA into RNA using the four ribonucleoside triphosphates as substrates. In Aeropyrum pernix (strain ATCC 700893 / DSM 11879 / JCM 9820 / NBRC 100138 / K1), this protein is DNA-directed RNA polymerase subunit Rpo10.